Consider the following 299-residue polypeptide: Zinc-alpha-2-glycoprotein (299 aa).

Positions 1-17 are cleaved as a signal peptide; the sequence is MVPVLLALLLLLGPAVS. N24, N125, and N256 each carry an N-linked (GlcNAc...) asparagine glycan. 2 disulfides stabilise this stretch: C120-C183 and C222-C277. The Ig-like C1-type domain maps to 204–289; it reads PSVSVTGHAA…EHRSLTRPLT (86 aa).

It belongs to the MHC class I family. As to quaternary structure, interacts with PIP.

The protein localises to the secreted. In terms of biological role, stimulates lipid degradation in adipocytes and causes the extensive fat losses associated with some advanced cancers. This chain is Zinc-alpha-2-glycoprotein (AZGP1), found in Bos taurus (Bovine).